A 213-amino-acid chain; its full sequence is 3-demethoxyubiquinol 3-hydroxylase (213 aa).

Fe cation-binding residues include glutamate 62, glutamate 92, histidine 95, glutamate 144, glutamate 176, and histidine 179.

Belongs to the COQ7 family. It depends on Fe cation as a cofactor.

It localises to the cell membrane. It catalyses the reaction a 5-methoxy-2-methyl-3-(all-trans-polyprenyl)benzene-1,4-diol + AH2 + O2 = a 3-demethylubiquinol + A + H2O. It participates in cofactor biosynthesis; ubiquinone biosynthesis. In terms of biological role, catalyzes the hydroxylation of 2-nonaprenyl-3-methyl-6-methoxy-1,4-benzoquinol during ubiquinone biosynthesis. The polypeptide is 3-demethoxyubiquinol 3-hydroxylase (Psychrobacter sp. (strain PRwf-1)).